The following is a 364-amino-acid chain: Methylthioribose-1-phosphate isomerase (364 aa).

D254 (proton donor) is an active-site residue.

The protein belongs to the eIF-2B alpha/beta/delta subunits family. MtnA subfamily.

The protein resides in the cytoplasm. Its subcellular location is the nucleus. It carries out the reaction 5-(methylsulfanyl)-alpha-D-ribose 1-phosphate = 5-(methylsulfanyl)-D-ribulose 1-phosphate. It functions in the pathway amino-acid biosynthesis; L-methionine biosynthesis via salvage pathway; L-methionine from S-methyl-5-thio-alpha-D-ribose 1-phosphate: step 1/6. Functionally, catalyzes the interconversion of methylthioribose-1-phosphate (MTR-1-P) into methylthioribulose-1-phosphate (MTRu-1-P). This chain is Methylthioribose-1-phosphate isomerase, found in Drosophila sechellia (Fruit fly).